Here is a 380-residue protein sequence, read N- to C-terminus: Cytochrome b (380 aa).

4 helical membrane-spanning segments follow: residues 33 to 53 (FGSLLGLCLITQTLTGLFLAM), 77 to 98 (WLLRNIHANGASFFFICIYLHI), 113 to 133 (WNIGVLLLLLVMMTAFVGYVL), and 178 to 198 (FFTFHFLLPFIIMGTTMLHLL). H83 and H97 together coordinate heme b. Heme b contacts are provided by H182 and H196. Residue H201 participates in a ubiquinone binding. The next 4 membrane-spanning stretches (helical) occupy residues 226–246 (YKDLLGFTILLATLSALALLN), 288–308 (LGGVLALLFSILILVVVPTLH), 320–340 (SSQTLFWILVANMLVLTWIGG), and 347–367 (FIIIGQVASVLYFMLFLFFIP).

It belongs to the cytochrome b family. In terms of assembly, the cytochrome bc1 complex contains 3 respiratory subunits (MT-CYB, CYC1 and UQCRFS1), 2 core proteins (UQCRC1 and UQCRC2) and probably 6 low-molecular weight proteins. It depends on heme b as a cofactor.

Its subcellular location is the mitochondrion inner membrane. Its function is as follows. Component of the ubiquinol-cytochrome c reductase complex (complex III or cytochrome b-c1 complex) that is part of the mitochondrial respiratory chain. The b-c1 complex mediates electron transfer from ubiquinol to cytochrome c. Contributes to the generation of a proton gradient across the mitochondrial membrane that is then used for ATP synthesis. This Lepisosteus oculatus (Spotted gar) protein is Cytochrome b (mt-cyb).